A 506-amino-acid polypeptide reads, in one-letter code: MTAQSAQSDNQVLLTMTNVSKSFPGVKALDKANLTVKSHSVHALMGENGAGKSTLLKCLFGIYAKDEGEILFLGKPVNFKTSKEALENGISMVHQELNLVRQRNVMDNLWLGRYPLKGVFVDHTKMYNDTKAIFDELDIDIDPREKVANLSVSQMQMIEIAKAFSYNAKIVIMDEPTSSLSEKEVEHLFKIIEKLKDRGCGIVYISHKMDEIFKICDEITILRDGKWINTVPVKGSTMEQIVAMMVGRELTQRFPPKINEPKEVILEVEHLTALNQPSIQDINFELRKGEILGIAGLVGAKRTDIVETIFGVRERKSGTVKLHGKIMKNRTALEAINNGFALVTEERRSTGIYANLSIEFNSLISNMKSYMNKWGLLSDKKMKSDTQWVIDSMNVKTPSHKTTIGSLSGGNQQKVVIGRWLLTQPEILMLDEPTRGIDVGAKYEIYQLIMQLAQKDKGIIMISSEMPELLGITDRILVMSNGKVAGIVETAKTSQEEILQLAAKYL.

ABC transporter domains follow at residues 14–249 (LTMT…VGRE) and 264–506 (VILE…AKYL). 46 to 53 (GENGAGKS) lines the ATP pocket.

This sequence belongs to the ABC transporter superfamily. Galactose/methyl galactoside importer (TC 3.A.1.2.3) family. The complex is composed of one ATP-binding protein (MglA), two transmembrane proteins (MglC) and a solute-binding protein (MglB).

The protein resides in the cell inner membrane. It catalyses the reaction D-galactose(out) + ATP + H2O = D-galactose(in) + ADP + phosphate + H(+). The catalysed reaction is methyl beta-D-galactoside(out) + ATP + H2O = methyl beta-D-galactoside(in) + ADP + phosphate + H(+). Part of the ABC transporter complex MglABC involved in galactose/methyl galactoside import. Responsible for energy coupling to the transport system. The sequence is that of Galactose/methyl galactoside import ATP-binding protein MglA from Mannheimia succiniciproducens (strain KCTC 0769BP / MBEL55E).